Reading from the N-terminus, the 288-residue chain is Elongation factor Ts (288 aa).

The involved in Mg(2+) ion dislocation from EF-Tu stretch occupies residues 82–85 (TDFV).

Belongs to the EF-Ts family.

The protein localises to the cytoplasm. Functionally, associates with the EF-Tu.GDP complex and induces the exchange of GDP to GTP. It remains bound to the aminoacyl-tRNA.EF-Tu.GTP complex up to the GTP hydrolysis stage on the ribosome. This is Elongation factor Ts from Chlorobium chlorochromatii (strain CaD3).